We begin with the raw amino-acid sequence, 495 residues long: Inner membrane ALBINO3-like protein 1, chloroplastic (495 aa).

The chain crosses the membrane as a helical span at residues 76–96; that stretch reads LGAIYVLADASASTAAAAVMP. Residues 97 to 206 are Stromal-facing; sequence TAVDSAAGAA…VLYEQAGVNP (110 aa). Residues 207–227 traverse the membrane as a helical segment; that stretch reads LAGCLPTLATIPIFIGLFSSL. Topologically, residues 228–273 are lumenal; sequence TNVANDGLLDTQGFYFVPSLAGPTTMAMRQSGLGTSWLWPLGPDGA. A helical membrane pass occupies residues 274-294; sequence PPIGWEDAAAYLTLPLLLVAV. The Stromal portion of the chain corresponds to 295-317; sequence QYASSSVTSPPIDPKDENANTQR. A helical membrane pass occupies residues 318-338; it reads ALLVFLPLMVGWFSLNVPAGL. Residues 339 to 441 lie on the Lumenal side of the membrane; it reads SLYYLANTVL…ASVSLSVDDS (103 aa). The chain crosses the membrane as a helical span at residues 442–462; it reads TAAIAGTATMAVTAGAPAAAM. The Stromal portion of the chain corresponds to 463 to 495; it reads DPSKVNRRCKRRRLTSLVQDGSTASAAVAGASA.

The protein belongs to the OXA1/ALB3/YidC (TC 2.A.9.2) family. In terms of assembly, associates with the LHCII complex and with the psaE subunit of the LHCI complex.

Its subcellular location is the plastid. It localises to the chloroplast thylakoid membrane. Required for the insertion of some light-harvesting complexes (LHC) proteins into the chloroplast thylakoid membrane. Essential for the assembly and activity of LHC I and II. Its function is probably partly distinct from that of ALB3.2. The chain is Inner membrane ALBINO3-like protein 1, chloroplastic (ALB3.1) from Chlamydomonas reinhardtii (Chlamydomonas smithii).